The sequence spans 424 residues: 5-methylthioadenosine/S-adenosylhomocysteine deaminase (424 aa).

Zn(2+) is bound by residues His60 and His62. Residues Glu89 and His181 each contribute to the substrate site. His208 contacts Zn(2+). Substrate contacts are provided by Glu211 and Asp296. Position 296 (Asp296) interacts with Zn(2+).

Belongs to the metallo-dependent hydrolases superfamily. MTA/SAH deaminase family. Requires Zn(2+) as cofactor.

The catalysed reaction is S-adenosyl-L-homocysteine + H2O + H(+) = S-inosyl-L-homocysteine + NH4(+). It catalyses the reaction S-methyl-5'-thioadenosine + H2O + H(+) = S-methyl-5'-thioinosine + NH4(+). In terms of biological role, catalyzes the deamination of 5-methylthioadenosine and S-adenosyl-L-homocysteine into 5-methylthioinosine and S-inosyl-L-homocysteine, respectively. Is also able to deaminate adenosine. The chain is 5-methylthioadenosine/S-adenosylhomocysteine deaminase from Thermococcus sibiricus (strain DSM 12597 / MM 739).